The sequence spans 96 residues: Muconolactone Delta-isomerase (96 aa).

It belongs to the muconolactone Delta-isomerase family. As to quaternary structure, homodecamer.

It carries out the reaction (S)-muconolactone = (4,5-dihydro-5-oxofuran-2-yl)-acetate. The protein operates within aromatic compound metabolism; beta-ketoadipate pathway; 5-oxo-4,5-dihydro-2-furylacetate from catechol: step 3/3. The polypeptide is Muconolactone Delta-isomerase (catC) (Pseudomonas putida (Arthrobacter siderocapsulatus)).